The sequence spans 617 residues: Protein AsmA (617 aa).

Residues 1–3 are Cytoplasmic-facing; it reads MRR. The helical transmembrane segment at 4–24 threads the bilayer; that stretch reads FLTTLMILLVVLVAGLSALVL. Residues 25-617 are Periplasmic-facing; sequence LVNPNDFRDY…KDVKKLLEKM (593 aa). Residues 302–319 show a composition bias toward polar residues; sequence TANGENGAAQQGQSQSTL. Residues 302 to 321 form a disordered region; sequence TANGENGAAQQGQSQSTLPR.

Belongs to the AsmA family.

It is found in the cell inner membrane. Could be involved in the assembly of outer membrane proteins. May indirectly influence the assembly of outer membrane proteins, potentially by altering outer membrane fluidity. Inhibits the assembly of mutant forms of outer membrane protein F (OmpF). The protein is Protein AsmA of Escherichia coli (strain K12).